The following is a 708-amino-acid chain: Leukotoxin translocation ATP-binding protein LktB (708 aa).

One can recognise a Peptidase C39 domain in the interval 1 to 126; it reads MEANHQRNDL…ACYQGQLILV (126 aa). One can recognise an ABC transmembrane type-1 domain in the interval 155 to 437; the sequence is FLETLIVSIF…LAQLWQDFQQ (283 aa). A run of 5 helical transmembrane segments spans residues 159 to 179, 192 to 212, 270 to 290, 296 to 316, and 389 to 409; these read LIVSIFLQIFALITPLFFQVV, LNIITVALAIVIIFEIVLSGL, ALTSVLDLLFSFIFFAVMWYY, LVILGSLPCYILWSIFISPIL, and VMVINLWLGAHLVISGDLSIG. The ABC transporter domain maps to 469–704; sequence ISFKNIRFRY…SNGLYSYLHQ (236 aa). 503–510 contributes to the ATP binding site; the sequence is GRSGSGKS.

The protein belongs to the ABC transporter superfamily. Protein-1 exporter (TC 3.A.1.109) family. In terms of assembly, homodimer.

Its subcellular location is the cell inner membrane. The catalysed reaction is ATP + H2O + proteinSide 1 = ADP + phosphate + proteinSide 2.. Its function is as follows. Part of the ABC transporter complex LktBD involved in leukotoxin export. Transmembrane domains (TMD) form a pore in the inner membrane and the ATP-binding domain (NBD) is responsible for energy generation. This chain is Leukotoxin translocation ATP-binding protein LktB (lktB), found in Mannheimia haemolytica (Pasteurella haemolytica).